The following is a 208-amino-acid chain: Segregation and condensation protein B (208 aa).

This sequence belongs to the ScpB family. As to quaternary structure, homodimer. Homodimerization may be required to stabilize the binding of ScpA to the Smc head domains. Component of a cohesin-like complex composed of ScpA, ScpB and the Smc homodimer, in which ScpA and ScpB bind to the head domain of Smc. The presence of the three proteins is required for the association of the complex with DNA.

It localises to the cytoplasm. Functionally, participates in chromosomal partition during cell division. May act via the formation of a condensin-like complex containing Smc and ScpA that pull DNA away from mid-cell into both cell halves. This is Segregation and condensation protein B from Mycoplasma pneumoniae (strain ATCC 29342 / M129 / Subtype 1) (Mycoplasmoides pneumoniae).